The chain runs to 585 residues: Isocitrate dehydrogenase kinase/phosphatase (585 aa).

ATP contacts are provided by residues 315–321 and Lys-336; that span reads APGVKGM. Residue Asp-371 is part of the active site.

The protein belongs to the AceK family.

Its subcellular location is the cytoplasm. The enzyme catalyses L-seryl-[isocitrate dehydrogenase] + ATP = O-phospho-L-seryl-[isocitrate dehydrogenase] + ADP + H(+). Functionally, bifunctional enzyme which can phosphorylate or dephosphorylate isocitrate dehydrogenase (IDH) on a specific serine residue. This is a regulatory mechanism which enables bacteria to bypass the Krebs cycle via the glyoxylate shunt in response to the source of carbon. When bacteria are grown on glucose, IDH is fully active and unphosphorylated, but when grown on acetate or ethanol, the activity of IDH declines drastically concomitant with its phosphorylation. The chain is Isocitrate dehydrogenase kinase/phosphatase from Photorhabdus laumondii subsp. laumondii (strain DSM 15139 / CIP 105565 / TT01) (Photorhabdus luminescens subsp. laumondii).